Consider the following 264-residue polypeptide: PDZ domain-containing protein 9 (264 aa).

A PDZ domain is found at 22 to 109 (VHNLSKTQQT…GTVLQIKVYR (88 aa)).

The chain is PDZ domain-containing protein 9 (PDZD9) from Macaca fascicularis (Crab-eating macaque).